We begin with the raw amino-acid sequence, 264 residues long: Thymidylate synthase (264 aa).

Arginine 21 contributes to the dUMP binding site. Position 51 (histidine 51) interacts with (6R)-5,10-methylene-5,6,7,8-tetrahydrofolate. 126–127 (RR) provides a ligand contact to dUMP. Cysteine 146 acts as the Nucleophile in catalysis. DUMP contacts are provided by residues 166 to 169 (RSAD), asparagine 177, and 207 to 209 (HLY). (6R)-5,10-methylene-5,6,7,8-tetrahydrofolate is bound at residue aspartate 169. Alanine 263 is a (6R)-5,10-methylene-5,6,7,8-tetrahydrofolate binding site.

This sequence belongs to the thymidylate synthase family. Bacterial-type ThyA subfamily. In terms of assembly, homodimer.

Its subcellular location is the cytoplasm. It catalyses the reaction dUMP + (6R)-5,10-methylene-5,6,7,8-tetrahydrofolate = 7,8-dihydrofolate + dTMP. The protein operates within pyrimidine metabolism; dTTP biosynthesis. Its function is as follows. Catalyzes the reductive methylation of 2'-deoxyuridine-5'-monophosphate (dUMP) to 2'-deoxythymidine-5'-monophosphate (dTMP) while utilizing 5,10-methylenetetrahydrofolate (mTHF) as the methyl donor and reductant in the reaction, yielding dihydrofolate (DHF) as a by-product. This enzymatic reaction provides an intracellular de novo source of dTMP, an essential precursor for DNA biosynthesis. This Allorhizobium ampelinum (strain ATCC BAA-846 / DSM 112012 / S4) (Agrobacterium vitis (strain S4)) protein is Thymidylate synthase.